Here is a 412-residue protein sequence, read N- to C-terminus: Multifunctional CCA protein (412 aa).

ATP-binding residues include Gly-8 and Arg-11. Residues Gly-8 and Arg-11 each coordinate CTP. Mg(2+)-binding residues include Asp-21 and Asp-23. ATP is bound by residues Arg-91, Arg-137, and Arg-140. Residues Arg-91, Arg-137, and Arg-140 each contribute to the CTP site. The region spanning 226–327 is the HD domain; it reads TGEHVLMVVE…VKVLERCDAL (102 aa).

This sequence belongs to the tRNA nucleotidyltransferase/poly(A) polymerase family. Bacterial CCA-adding enzyme type 1 subfamily. Monomer. Can also form homodimers and oligomers. Mg(2+) serves as cofactor. It depends on Ni(2+) as a cofactor.

It catalyses the reaction a tRNA precursor + 2 CTP + ATP = a tRNA with a 3' CCA end + 3 diphosphate. It carries out the reaction a tRNA with a 3' CCA end + 2 CTP + ATP = a tRNA with a 3' CCACCA end + 3 diphosphate. Its function is as follows. Catalyzes the addition and repair of the essential 3'-terminal CCA sequence in tRNAs without using a nucleic acid template. Adds these three nucleotides in the order of C, C, and A to the tRNA nucleotide-73, using CTP and ATP as substrates and producing inorganic pyrophosphate. tRNA 3'-terminal CCA addition is required both for tRNA processing and repair. Also involved in tRNA surveillance by mediating tandem CCA addition to generate a CCACCA at the 3' terminus of unstable tRNAs. While stable tRNAs receive only 3'-terminal CCA, unstable tRNAs are marked with CCACCA and rapidly degraded. The polypeptide is Multifunctional CCA protein (Azoarcus sp. (strain BH72)).